We begin with the raw amino-acid sequence, 185 residues long: uncharacterized protein (185 aa).

A disordered region spans residues 160 to 185; it reads QYTGPAVPSVPTTNLNDIGDPTKTVQ.

This is an uncharacterized protein from Saccharomyces cerevisiae (strain ATCC 204508 / S288c) (Baker's yeast).